The chain runs to 279 residues: Elongation factor Ts (279 aa).

An involved in Mg(2+) ion dislocation from EF-Tu region spans residues T80 to V83.

This sequence belongs to the EF-Ts family.

The protein resides in the cytoplasm. Functionally, associates with the EF-Tu.GDP complex and induces the exchange of GDP to GTP. It remains bound to the aminoacyl-tRNA.EF-Tu.GTP complex up to the GTP hydrolysis stage on the ribosome. The polypeptide is Elongation factor Ts (tsf) (Borreliella burgdorferi (strain ATCC 35210 / DSM 4680 / CIP 102532 / B31) (Borrelia burgdorferi)).